A 141-amino-acid chain; its full sequence is Galactose-6-phosphate isomerase subunit LacA 1 (141 aa).

Belongs to the LacAB/RpiB family. In terms of assembly, heteromultimeric protein consisting of LacA and LacB.

It catalyses the reaction aldehydo-D-galactose 6-phosphate = keto-D-tagatose 6-phosphate. It functions in the pathway carbohydrate metabolism; D-galactose 6-phosphate degradation; D-tagatose 6-phosphate from D-galactose 6-phosphate: step 1/1. The chain is Galactose-6-phosphate isomerase subunit LacA 1 from Streptococcus pyogenes serotype M3 (strain SSI-1).